The sequence spans 472 residues: Na(+)/H(+) antiporter NhaA (472 aa).

10 consecutive transmembrane segments (helical) span residues isoleucine 24–alanine 44, leucine 66–leucine 86, leucine 108–phenylalanine 128, glycine 156–alanine 176, leucine 196–isoleucine 216, valine 234–glycine 254, proline 290–glutamate 310, methionine 312–glycine 332, methionine 361–leucine 381, and alanine 392–serine 412. Residues alanine 422–histidine 472 are disordered. A compositionally biased stretch (acidic residues) spans alanine 427–aspartate 436. A compositionally biased stretch (low complexity) spans histidine 445–proline 456.

This sequence belongs to the NhaA Na(+)/H(+) (TC 2.A.33) antiporter family.

The protein localises to the cell membrane. The catalysed reaction is Na(+)(in) + 2 H(+)(out) = Na(+)(out) + 2 H(+)(in). Its function is as follows. Na(+)/H(+) antiporter that extrudes sodium in exchange for external protons. In Bifidobacterium longum (strain NCC 2705), this protein is Na(+)/H(+) antiporter NhaA.